The following is a 504-amino-acid chain: Maturase K (504 aa).

Belongs to the intron maturase 2 family. MatK subfamily.

It is found in the plastid. The protein localises to the chloroplast. Usually encoded in the trnK tRNA gene intron. Probably assists in splicing its own and other chloroplast group II introns. The sequence is that of Maturase K from Bombax buonopozense (Red-flowered silk cotton tree).